The sequence spans 274 residues: Diaminopimelate epimerase (274 aa).

Substrate contacts are provided by N11, Q44, and N64. Catalysis depends on C73, which acts as the Proton donor. Substrate is bound by residues G74 to N75, N157, N190, and E208 to R209. C217 acts as the Proton acceptor in catalysis. G218–S219 serves as a coordination point for substrate.

The protein belongs to the diaminopimelate epimerase family. In terms of assembly, homodimer.

It localises to the cytoplasm. The enzyme catalyses (2S,6S)-2,6-diaminopimelate = meso-2,6-diaminopimelate. The protein operates within amino-acid biosynthesis; L-lysine biosynthesis via DAP pathway; DL-2,6-diaminopimelate from LL-2,6-diaminopimelate: step 1/1. Its function is as follows. Catalyzes the stereoinversion of LL-2,6-diaminopimelate (L,L-DAP) to meso-diaminopimelate (meso-DAP), a precursor of L-lysine and an essential component of the bacterial peptidoglycan. The sequence is that of Diaminopimelate epimerase from Pectobacterium atrosepticum (strain SCRI 1043 / ATCC BAA-672) (Erwinia carotovora subsp. atroseptica).